The chain runs to 126 residues: Heavy metal-associated isoprenylated plant protein 14 (126 aa).

The HMA domain maps to 3 to 69 (AKNAVLQLSI…LCNTEIVSVD (67 aa)). Cysteine 123 is subject to Cysteine methyl ester. The S-farnesyl cysteine moiety is linked to residue cysteine 123. Positions 124–126 (VIM) are cleaved as a propeptide — removed in mature form.

It belongs to the HIPP family.

In terms of biological role, probable heavy-metal-binding protein. The protein is Heavy metal-associated isoprenylated plant protein 14 of Arabidopsis thaliana (Mouse-ear cress).